The chain runs to 136 residues: Calcitonin (136 aa).

Residues Met1–Ala25 form the signal peptide. The propeptide occupies Val26–Ser82. At Ser42 the chain carries Phosphoserine. Positions Leu64–Arg84 are disordered. Cys85 and Cys91 are disulfide-bonded. N-linked (GlcNAc...) asparagine glycosylation occurs at Asn87. The tract at residues Gly114–Asn136 is disordered. Position 116 is a proline amide (Pro116). The span at Lys118–His130 shows a compositional bias: basic and acidic residues. The propeptide occupies Asp121 to Asn136.

The protein belongs to the calcitonin family.

It is found in the secreted. In terms of biological role, calcitonin is a peptide hormone that causes a rapid but short-lived drop in the level of calcium and phosphate in blood by promoting the incorporation of those ions in the bones. Calcitonin function is mediated by the calcitonin receptor/CALCR and the CALCR-RAMP2 (AMYR2) receptor complex. In Rattus norvegicus (Rat), this protein is Calcitonin.